A 334-amino-acid chain; its full sequence is Ribosomal RNA small subunit methyltransferase H (334 aa).

Positions 1–21 (MNALPIRTAAPSGHSGGHSST) are disordered. S-adenosyl-L-methionine-binding positions include 52 to 54 (GGY), aspartate 71, phenylalanine 98, aspartate 119, and glutamine 126.

This sequence belongs to the methyltransferase superfamily. RsmH family.

Its subcellular location is the cytoplasm. The enzyme catalyses cytidine(1402) in 16S rRNA + S-adenosyl-L-methionine = N(4)-methylcytidine(1402) in 16S rRNA + S-adenosyl-L-homocysteine + H(+). In terms of biological role, specifically methylates the N4 position of cytidine in position 1402 (C1402) of 16S rRNA. This chain is Ribosomal RNA small subunit methyltransferase H, found in Granulibacter bethesdensis (strain ATCC BAA-1260 / CGDNIH1).